The sequence spans 224 residues: EEF1A lysine methyltransferase 3 (224 aa).

S-adenosyl-L-methionine contacts are provided by residues W58, 84–86 (GAG), D105, W134, and A151.

It belongs to the methyltransferase superfamily. METTL21 family.

The protein localises to the cytoplasm. Its subcellular location is the cytoskeleton. It localises to the microtubule organizing center. It is found in the centrosome. The catalysed reaction is L-lysyl-[protein] + 3 S-adenosyl-L-methionine = N(6),N(6),N(6)-trimethyl-L-lysyl-[protein] + 3 S-adenosyl-L-homocysteine + 3 H(+). It catalyses the reaction L-lysyl-[protein] + S-adenosyl-L-methionine = N(6)-methyl-L-lysyl-[protein] + S-adenosyl-L-homocysteine + H(+). It carries out the reaction N(6)-methyl-L-lysyl-[protein] + S-adenosyl-L-methionine = N(6),N(6)-dimethyl-L-lysyl-[protein] + S-adenosyl-L-homocysteine + H(+). The enzyme catalyses N(6),N(6)-dimethyl-L-lysyl-[protein] + S-adenosyl-L-methionine = N(6),N(6),N(6)-trimethyl-L-lysyl-[protein] + S-adenosyl-L-homocysteine + H(+). Protein-lysine methyltransferase that selectively mono-, di- and trimethylates 'Lys-165' of the translation elongation factors EEF1A1 and EEF1A2 in an aminoacyl-tRNA and GTP-dependent manner. EEF1A1 methylation by EEF1AKMT3 is dynamic as well as inducible by stress conditions, such as ER-stress, and plays a regulatory role on mRNA translation. This chain is EEF1A lysine methyltransferase 3, found in Xenopus tropicalis (Western clawed frog).